The chain runs to 360 residues: Zinc finger protein ztf-2 (360 aa).

Positions 19-41 (LSSPEKEHRRKRRRGEVANPSNT) are disordered. 3 consecutive C2H2-type zinc fingers follow at residues 87-109 (RTCSTCGYQGKWVSEMIRHKRVH), 115-138 (FKCRYCSRTSKWKADLIRHVAKTH), and 180-203 (YRCQLCSFEDERVSVLNSHVSHLH). A compositionally biased stretch (low complexity) spans 248–260 (PLSPCRSESSSDS). The tract at residues 248–272 (PLSPCRSESSSDSGIQTDPEEEASI) is disordered.

In terms of tissue distribution, expressed in pharyngeal epithelium/arcade, which connects the pharynx to the mouth.

Its function is as follows. Transcription factor. Represses gene expression, probably via binding to DNA consensus sequence 5'-[AT][CT]TTCC[AC][AG]-3' in promoter regions. May play a role in pharynx morphogenesis. This chain is Zinc finger protein ztf-2, found in Caenorhabditis elegans.